The following is an 852-amino-acid chain: Disks large homolog 2 (852 aa).

Residues Cys5 and Cys7 are each lipidated (S-palmitoyl cysteine). Ser28 carries the phosphoserine modification. Tyr58 bears the Phosphotyrosine mark. Position 65 is a phosphoserine (Ser65). PDZ domains follow at residues 98–184 (EITL…VRRR) and 193–279 (EIKL…VGKP). Phosphoserine is present on residues Ser307, Ser328, Ser360, Ser365, Ser406, and Ser414. The PDZ 3 domain maps to 421–501 (KVVLHKGSTG…QTVTIIAQYQ (81 aa)). A Phosphotyrosine modification is found at Tyr505. 3 positions are modified to phosphoserine: Ser528, Ser530, and Ser553. Residues 536 to 606 (KRSLYVRAMF…PSKRRVERKE (71 aa)) enclose the SH3 domain. The 176-residue stretch at 662-837 (TRPVIILGPM…IYNQCKLVIE (176 aa)) folds into the Guanylate kinase-like domain. Tyr732 and Tyr737 each carry phosphotyrosine.

The protein belongs to the MAGUK family. Interacts through its PDZ domains with NETO1. Interacts with NOS1/nNOS through second PDZ domain. Interacts with KCNJ2/Kir2.1 (via C-terminus) through one of its PDZ domains. Interacts with KCNJ4. Interacts with FRMPD4 (via C-terminus). Interacts with LRFN1. Interacts with LRFN2 and LRFN4. Interacts with FASLG. Interacts with ADAM22. Interacts with DGKI (via PDZ-binding motif). Palmitoylation of isoform 1 and isoform 2 is not required for targeting to postsynaptic density. In terms of tissue distribution, detected in juxtaparanodal zones in the central nervous system and at nerve terminal plexuses of basket cells in the cerebellum (at protein level). Brain. High levels in cerebellar Purkinje cells. Expressed in pyramidal cells of the Ammons's horn and granular cells of the dentate gyrus in the hippocampus as well as cerebral cortex and striatum. High levels in dorsal horn of spinal cord.

The protein resides in the cell membrane. It localises to the postsynaptic density. The protein localises to the synapse. It is found in the cell projection. Its subcellular location is the axon. The protein resides in the membrane. It localises to the perikaryon. Its function is as follows. Required for perception of chronic pain through NMDA receptor signaling. Regulates surface expression of NMDA receptors in dorsal horn neurons of the spinal cord. Interacts with the cytoplasmic tail of NMDA receptor subunits as well as inward rectifying potassium channels. Involved in regulation of synaptic stability at cholinergic synapses. Part of the postsynaptic protein scaffold of excitatory synapses. The sequence is that of Disks large homolog 2 (Dlg2) from Rattus norvegicus (Rat).